Consider the following 223-residue polypeptide: Enolase-phosphatase E1 (223 aa).

The protein belongs to the HAD-like hydrolase superfamily. MasA/MtnC family. Monomer. Mg(2+) is required as a cofactor.

It catalyses the reaction 5-methylsulfanyl-2,3-dioxopentyl phosphate + H2O = 1,2-dihydroxy-5-(methylsulfanyl)pent-1-en-3-one + phosphate. The protein operates within amino-acid biosynthesis; L-methionine biosynthesis via salvage pathway; L-methionine from S-methyl-5-thio-alpha-D-ribose 1-phosphate: step 3/6. It participates in amino-acid biosynthesis; L-methionine biosynthesis via salvage pathway; L-methionine from S-methyl-5-thio-alpha-D-ribose 1-phosphate: step 4/6. Functionally, bifunctional enzyme that catalyzes the enolization of 2,3-diketo-5-methylthiopentyl-1-phosphate (DK-MTP-1-P) into the intermediate 2-hydroxy-3-keto-5-methylthiopentenyl-1-phosphate (HK-MTPenyl-1-P), which is then dephosphorylated to form the acireductone 1,2-dihydroxy-3-keto-5-methylthiopentene (DHK-MTPene). This is Enolase-phosphatase E1 from Aquifex aeolicus (strain VF5).